Consider the following 242-residue polypeptide: uncharacterized protein (242 aa).

In terms of domain architecture, S4 RNA-binding spans 2–69; sequence YRLAKIISNA…KPRLWIYYKP (68 aa). Asp102 (nucleophile) is an active-site residue.

This sequence belongs to the pseudouridine synthase RsuA family.

The enzyme catalyses a uridine in RNA = a pseudouridine in RNA. This is an uncharacterized protein from Rickettsia typhi (strain ATCC VR-144 / Wilmington).